Here is a 338-residue protein sequence, read N- to C-terminus: MTDHALLLVNLGSPASTSVADVRRYLNQFLMDPYVVDLPWPVRRLLVSLILIKRPEQSAHAYASIWWEEGSPLVVLTRRLQAAMVEHWPHGPVEIAMRYGQPALPDVLERLAAQGVRKVTLAPLYPQFADSTVTTVVDLAKQTVSERQLPLQMRVLQPFYEHPAYIEALAASARPHLETGYDHLLLSFHGLPERHLKKLFPKGVKHDLRAADCCHGATAEVRSVCYRGQCLATAKAFAQKMGIPDGKWSVSFQSRLGRDKWIEPYTETRLDELAKAGVKKLLVMCPAFVADCIETLEEIGMRGSEQFVEAGGRELVLVPCLNDHPEWVRVLADMCEKA.

Positions 189 and 294 each coordinate Fe cation.

The protein belongs to the ferrochelatase family.

The protein localises to the cytoplasm. The catalysed reaction is heme b + 2 H(+) = protoporphyrin IX + Fe(2+). Its pathway is porphyrin-containing compound metabolism; protoheme biosynthesis; protoheme from protoporphyrin-IX: step 1/1. Catalyzes the ferrous insertion into protoporphyrin IX. In Pseudomonas putida (strain ATCC 700007 / DSM 6899 / JCM 31910 / BCRC 17059 / LMG 24140 / F1), this protein is Ferrochelatase.